Reading from the N-terminus, the 447-residue chain is GTPase Der (447 aa).

2 EngA-type G domains span residues 3-167 (PVIA…VQER) and 181-354 (VKIA…AAAM). Residues 9–16 (GRPNVGKS), 56–60 (DTGGF), 119–122 (NKAE), 187–194 (GRPNVGKS), 234–238 (DTAGL), and 299–302 (NKWD) contribute to the GTP site. Positions 355–439 (IKLPTPQITR…PLRIEFRTNK (85 aa)) constitute a KH-like domain.

This sequence belongs to the TRAFAC class TrmE-Era-EngA-EngB-Septin-like GTPase superfamily. EngA (Der) GTPase family. As to quaternary structure, associates with the 50S ribosomal subunit.

GTPase that plays an essential role in the late steps of ribosome biogenesis. The polypeptide is GTPase Der (Cupriavidus metallidurans (strain ATCC 43123 / DSM 2839 / NBRC 102507 / CH34) (Ralstonia metallidurans)).